A 201-amino-acid chain; its full sequence is Small ribosomal subunit protein uS4c (201 aa).

The 61-residue stretch at 91 to 151 (MRLDNIIFQL…TKNPEELRTI (61 aa)) folds into the S4 RNA-binding domain.

This sequence belongs to the universal ribosomal protein uS4 family. In terms of assembly, part of the 30S ribosomal subunit. Contacts protein S5. The interaction surface between S4 and S5 is involved in control of translational fidelity.

It is found in the plastid. Its subcellular location is the chloroplast. In terms of biological role, one of the primary rRNA binding proteins, it binds directly to 16S rRNA where it nucleates assembly of the body of the 30S subunit. Functionally, with S5 and S12 plays an important role in translational accuracy. The sequence is that of Small ribosomal subunit protein uS4c (rps4) from Welwitschia mirabilis (Tree tumbo).